The primary structure comprises 89 residues: MAKESMKARELKRARLVAKYVDKRVRLKKEGNYDSLQALPKNASPVRLHNRCRITGRSKGYIRQFGISRIQLREMASMGLVPGVRKASW.

This sequence belongs to the universal ribosomal protein uS14 family. In terms of assembly, part of the 30S ribosomal subunit. Contacts proteins S3 and S10.

In terms of biological role, binds 16S rRNA, required for the assembly of 30S particles and may also be responsible for determining the conformation of the 16S rRNA at the A site. The protein is Small ribosomal subunit protein uS14 of Azobacteroides pseudotrichonymphae genomovar. CFP2.